The sequence spans 221 residues: Ribosomal RNA large subunit methyltransferase E (221 aa).

Positions 60, 62, 89, 105, and 134 each coordinate S-adenosyl-L-methionine. Lys174 functions as the Proton acceptor in the catalytic mechanism.

Belongs to the class I-like SAM-binding methyltransferase superfamily. RNA methyltransferase RlmE family.

It is found in the cytoplasm. It catalyses the reaction uridine(2552) in 23S rRNA + S-adenosyl-L-methionine = 2'-O-methyluridine(2552) in 23S rRNA + S-adenosyl-L-homocysteine + H(+). Specifically methylates the uridine in position 2552 of 23S rRNA at the 2'-O position of the ribose in the fully assembled 50S ribosomal subunit. The protein is Ribosomal RNA large subunit methyltransferase E of Cupriavidus taiwanensis (strain DSM 17343 / BCRC 17206 / CCUG 44338 / CIP 107171 / LMG 19424 / R1) (Ralstonia taiwanensis (strain LMG 19424)).